The chain runs to 325 residues: Forkhead box protein B1 (325 aa).

The fork-head DNA-binding region spans 12 to 103 (QKPPYSYISL…GDMFENGSFL (92 aa)). Low complexity predominate over residues 284–309 (LSNSPPSLSPTSSQTATSQSSPATPS). The interval 284–325 (LSNSPPSLSPTSSQTATSQSSPATPSETLTSPASALHSVAVH) is disordered.

As to expression, expressed widespread in the early developing ventricular zone of the neural tube and later restricted to areas of the spinal cord, hindbrain, thalamus and hypothalamus. Expressed in epithelial cells of developing and adult mammary glands.

The protein resides in the nucleus. In terms of biological role, transcription factor expressed by neural progenitor cells in specific regions of the embryonic neuroepithelium. Essential for the mammillary nuclei maintenance. Negatively regulates the proliferation of oligodendrocyte progenitors and promotes oligodendrocyte maturation. Also expressed in mammary glands, plays a role in lactation, controls development of mammary glands and the inferior colliculi of the midbrain in the central nervous system that regulates the milk-ejection reflex. The sequence is that of Forkhead box protein B1 (Foxb1) from Mus musculus (Mouse).